The following is a 1967-amino-acid chain: RQC trigger complex helicase SLH1 (1967 aa).

The 189-residue stretch at 297–485 (PVAYKTNENM…FLGVNRQIGM (189 aa)) folds into the Helicase ATP-binding 1 domain. An ATP-binding site is contributed by 310–317 (APTGAGKT). The DEVH box motif lies at 427-430 (DEVH). The region spanning 516–735 (NIDKVAYDKL…NVDEAIEWLG (220 aa)) is the Helicase C-terminal 1 domain. The 306-residue stretch at 795–1100 (AKDLGRVSSD…GCESTHAISF (306 aa)) folds into the SEC63 1 domain. One can recognise a Helicase ATP-binding 2 domain in the interval 1149 to 1324 (YTLYNTNENA…WLGVKDHGLY (176 aa)). 1162-1169 (SPTGSGKT) contacts ATP. The short motif at 1266–1269 (DEIH) is the DEAH box element. In terms of domain architecture, Helicase C-terminal 2 spans 1355 to 1550 (MNKPVFMAIK…SLHKVLDDHL (196 aa)). The region spanning 1626–1776 (ATPFLSISSY…MMQCIKQGYW (151 aa)) is the SEC63 2 domain.

The protein belongs to the helicase family. SKI2 subfamily. As to quaternary structure, component of the RQT (ribosome quality control trigger) complex, composed of SLH1, CUE3, and RQT4. Interacts with CUE3. Interacts with RQT4. Interacts with HEL2. Associates with translating ribosomes.

Its subcellular location is the cytoplasm. It is found in the cytosol. It catalyses the reaction ATP + H2O = ADP + phosphate + H(+). Its function is as follows. Involved in activation of the ribosome quality control (RQC) pathway, a pathway that degrades nascent peptide chains during problematic translation. Drives the splitting of stalled ribosomes that are polyubiquitinated in a HEL2-dependent manner, as part of the ribosome quality control trigger (RQT) complex. Also represses the translation of non-poly(A) mRNAs together with SKI2. May block translation by inhibiting translation initiation factor 5B (FUN12) action on mRNAs lacking a 3' poly(A) structure. Involved in antiviral defense, preventing L-A dsRNA virus propagation by specifically blocking translation of viral mRNAs. In Saccharomyces cerevisiae (strain ATCC 204508 / S288c) (Baker's yeast), this protein is RQC trigger complex helicase SLH1.